A 436-amino-acid polypeptide reads, in one-letter code: Fasciclin-like arabinogalactan protein 15 (436 aa).

The signal sequence occupies residues 1–20; sequence MDDLSKLLFFLLLTISITTA. 2 FAS1 domains span residues 31–165 and 249–392; these read NSNS…ERLL and VKDF…DGVL. N-linked (GlcNAc...) asparagine glycans are attached at residues Asn-68 and Asn-271.

Belongs to the fasciclin-like AGP family.

The protein localises to the secreted. May be a cell surface adhesion protein. The polypeptide is Fasciclin-like arabinogalactan protein 15 (FLA15) (Arabidopsis thaliana (Mouse-ear cress)).